The following is a 170-amino-acid chain: Small ribosomal subunit protein uS5 (170 aa).

The 64-residue stretch at 12-75 (LSELLVSVRR…NAAKKSMIRV (64 aa)) folds into the S5 DRBM domain.

The protein belongs to the universal ribosomal protein uS5 family. As to quaternary structure, part of the 30S ribosomal subunit. Contacts proteins S4 and S8.

Its function is as follows. With S4 and S12 plays an important role in translational accuracy. In terms of biological role, located at the back of the 30S subunit body where it stabilizes the conformation of the head with respect to the body. This is Small ribosomal subunit protein uS5 from Wolbachia pipientis wMel.